Reading from the N-terminus, the 264-residue chain is tRNA (guanine-N(1)-)-methyltransferase (264 aa).

Residues Gly133 and 152–157 (LGDFVM) each bind S-adenosyl-L-methionine. The span at 240–251 (QRRPDLWRKARG) shows a compositional bias: basic and acidic residues. Residues 240 to 264 (QRRPDLWRKARGGEPPADESGEVRR) form a disordered region. Acidic residues predominate over residues 255–264 (PADESGEVRR).

The protein belongs to the RNA methyltransferase TrmD family. As to quaternary structure, homodimer.

The protein localises to the cytoplasm. It carries out the reaction guanosine(37) in tRNA + S-adenosyl-L-methionine = N(1)-methylguanosine(37) in tRNA + S-adenosyl-L-homocysteine + H(+). Functionally, specifically methylates guanosine-37 in various tRNAs. The protein is tRNA (guanine-N(1)-)-methyltransferase of Sorangium cellulosum (strain So ce56) (Polyangium cellulosum (strain So ce56)).